Reading from the N-terminus, the 179-residue chain is Sodium/potassium-transporting ATPase subunit beta-1-interacting protein 3 (179 aa).

4 consecutive transmembrane segments (helical) span residues 5–22 (TGRCTLVFICTLQMLVAL), 35–55 (APILGNFLHIIVVILGLFGTI), 62–82 (IVAYTIWTAFWVAWNVFIICF), and 151–171 (AVQILLSLIGFVYACYVISVI).

This sequence belongs to the NKAIN family. Interacts with atp1b1 C-terminus.

The protein resides in the cell membrane. The polypeptide is Sodium/potassium-transporting ATPase subunit beta-1-interacting protein 3 (nkain3) (Xenopus laevis (African clawed frog)).